We begin with the raw amino-acid sequence, 363 residues long: Cytoplasmic tRNA 2-thiolation protein 1 (363 aa).

The segment at 340 to 363 (ASLNGTPRTPPTPAEPVEGIERAA) is disordered.

It belongs to the TtcA family. CTU1/NCS6/ATPBD3 subfamily.

The protein resides in the cytoplasm. It participates in tRNA modification; 5-methoxycarbonylmethyl-2-thiouridine-tRNA biosynthesis. In terms of biological role, plays a central role in 2-thiolation of mcm(5)S(2)U at tRNA wobble positions of tRNA(Lys), tRNA(Glu) and tRNA(Gln). Directly binds tRNAs and probably acts by catalyzing adenylation of tRNAs, an intermediate required for 2-thiolation. It is unclear whether it acts as a sulfurtransferase that transfers sulfur from thiocarboxylated URM1 onto the uridine of tRNAs at wobble position. Prior mcm(5) tRNA modification by the elongator complex is required for 2-thiolation. May also be involved in protein urmylation. The polypeptide is Cytoplasmic tRNA 2-thiolation protein 1 (Cryptococcus neoformans var. neoformans serotype D (strain B-3501A) (Filobasidiella neoformans)).